The sequence spans 364 residues: Peptide chain release factor 1 (364 aa).

An N5-methylglutamine modification is found at Gln232.

This sequence belongs to the prokaryotic/mitochondrial release factor family. In terms of processing, methylated by PrmC. Methylation increases the termination efficiency of RF1.

Its subcellular location is the cytoplasm. Peptide chain release factor 1 directs the termination of translation in response to the peptide chain termination codons UAG and UAA. The protein is Peptide chain release factor 1 of Sorangium cellulosum (strain So ce56) (Polyangium cellulosum (strain So ce56)).